A 353-amino-acid chain; its full sequence is Chloroplastic lipocalin (353 aa).

Over residues 1–18 the composition is skewed to low complexity; sequence MILLSSSISLSRPVSSQS. The tract at residues 1–27 is disordered; the sequence is MILLSSSISLSRPVSSQSFSPPAATST. A chloroplast-targeting transit peptide spans 1-39; that stretch reads MILLSSSISLSRPVSSQSFSPPAATSTRRSHSSVTVKCC. Cys163 and Cys299 are joined by a disulfide.

This sequence belongs to the calycin superfamily. Lipocalin family. Expressed in leaves at low levels (at protein levels). Present in seeds.

Its subcellular location is the plastid. It is found in the chloroplast thylakoid lumen. Lipocalin that prevents thylakoidal membrane lipids peroxidation and confers protection against oxidative stress, especially mediated by singlet oxygen in response to high light and other stress (e.g. heat shocks). Required for seed longevity by ensuring polyunsaturated lipids integrity. This Arabidopsis thaliana (Mouse-ear cress) protein is Chloroplastic lipocalin.